The following is a 110-amino-acid chain: ATP-dependent Clp protease adapter protein ClpS (110 aa).

This sequence belongs to the ClpS family. Binds to the N-terminal domain of the chaperone ClpA.

Its function is as follows. Involved in the modulation of the specificity of the ClpAP-mediated ATP-dependent protein degradation. The protein is ATP-dependent Clp protease adapter protein ClpS of Bartonella quintana (strain Toulouse) (Rochalimaea quintana).